A 364-amino-acid chain; its full sequence is Dihydroorotate dehydrogenase (quinone) (364 aa).

FMN is bound by residues 78 to 82 (AGFDK) and Thr102. A substrate-binding site is contributed by Lys82. 127 to 131 (NRMGF) provides a ligand contact to substrate. 2 residues coordinate FMN: Asn156 and Asn189. Position 189 (Asn189) interacts with substrate. Catalysis depends on Ser192, which acts as the Nucleophile. Asn194 contacts substrate. Residues Lys227 and Thr255 each coordinate FMN. Residue 256 to 257 (NT) coordinates substrate. Residues Gly285, Gly314, and 335 to 336 (YT) each bind FMN.

The protein belongs to the dihydroorotate dehydrogenase family. Type 2 subfamily. Monomer. Requires FMN as cofactor.

Its subcellular location is the cell membrane. The catalysed reaction is (S)-dihydroorotate + a quinone = orotate + a quinol. It participates in pyrimidine metabolism; UMP biosynthesis via de novo pathway; orotate from (S)-dihydroorotate (quinone route): step 1/1. Functionally, catalyzes the conversion of dihydroorotate to orotate with quinone as electron acceptor. The protein is Dihydroorotate dehydrogenase (quinone) of Thermosynechococcus vestitus (strain NIES-2133 / IAM M-273 / BP-1).